We begin with the raw amino-acid sequence, 372 residues long: Sesquiterpene synthase Agr9 (372 aa).

Positions 87, 225, 229, and 233 each coordinate Mg(2+). The DDXXD motif signature appears at 87-91; that stretch reads DEYTD. (2E,6E)-farnesyl diphosphate-binding residues include R314 and Y315.

This sequence belongs to the terpene synthase family. Mg(2+) serves as cofactor.

It carries out the reaction (2E,6E)-farnesyl diphosphate = gamma-muurolene + diphosphate. It catalyses the reaction (2E,6E)-farnesyl diphosphate = delta-cadinene + diphosphate. Its function is as follows. Terpene cyclase that catalyzes the cyclization of farnesyl diphosphate (FPP) to various sesquiterpenes, including gamma-muurolene, beta-cadinene and delta-cadinene. This is Sesquiterpene synthase Agr9 from Cyclocybe aegerita (Black poplar mushroom).